The following is a 122-amino-acid chain: uncharacterized protein (122 aa).

Disordered stretches follow at residues Met-1–Glu-30 and Phe-96–Gly-122.

This is an uncharacterized protein from Homo sapiens (Human).